A 126-amino-acid chain; its full sequence is UPF0102 protein plu4003 (126 aa).

Belongs to the UPF0102 family.

This chain is UPF0102 protein plu4003, found in Photorhabdus laumondii subsp. laumondii (strain DSM 15139 / CIP 105565 / TT01) (Photorhabdus luminescens subsp. laumondii).